The primary structure comprises 123 residues: Large ribosomal subunit protein uL14 (123 aa).

It belongs to the universal ribosomal protein uL14 family. Part of the 50S ribosomal subunit. Forms a cluster with proteins L3 and L19. In the 70S ribosome, L14 and L19 interact and together make contacts with the 16S rRNA in bridges B5 and B8.

Its function is as follows. Binds to 23S rRNA. Forms part of two intersubunit bridges in the 70S ribosome. The chain is Large ribosomal subunit protein uL14 from Citrobacter koseri (strain ATCC BAA-895 / CDC 4225-83 / SGSC4696).